A 436-amino-acid chain; its full sequence is 3-ketoacyl-CoA thiolase (436 aa).

The active-site Acyl-thioester intermediate is C99. Active-site proton acceptor residues include H392 and C422.

This sequence belongs to the thiolase-like superfamily. Thiolase family. Heterotetramer of two alpha chains (FadJ) and two beta chains (FadI).

Its subcellular location is the cytoplasm. It carries out the reaction an acyl-CoA + acetyl-CoA = a 3-oxoacyl-CoA + CoA. The protein operates within lipid metabolism; fatty acid beta-oxidation. In terms of biological role, catalyzes the final step of fatty acid oxidation in which acetyl-CoA is released and the CoA ester of a fatty acid two carbons shorter is formed. This Shigella flexneri serotype 5b (strain 8401) protein is 3-ketoacyl-CoA thiolase.